Here is a 1023-residue protein sequence, read N- to C-terminus: 2-oxoglutarate dehydrogenase complex component E1 (1023 aa).

The transit peptide at 1–40 (MFHLRTCAAKLRPLTASQTVKTFSQNRPAAARTFQQIRCY) directs the protein to the mitochondrion. Lysine 74 carries the post-translational modification N6-succinyllysine. Serine 100 carries the post-translational modification Phosphoserine. Residues histidine 143, aspartate 156, and aspartate 158 each contribute to the Ca(2+) site. Arginine 312 provides a ligand contact to thiamine diphosphate. N6-acetyllysine is present on lysine 401. Thiamine diphosphate contacts are provided by aspartate 411, asparagine 444, and isoleucine 446. Positions 411, 444, and 446 each coordinate Mg(2+). A Glycyl lysine isopeptide (Lys-Gly) (interchain with G-Cter in ubiquitin) cross-link involves residue lysine 534. Lysine 564 bears the N6-succinyllysine mark. A thiamine diphosphate-binding site is contributed by glutamine 676. Position 970 is an N6-acetyllysine (lysine 970).

The protein belongs to the alpha-ketoglutarate dehydrogenase family. Homodimer. The 2-oxoglutarate dehydrogenase complex is composed of OGDH (2-oxoglutarate dehydrogenase; E1), DLST (dihydrolipoamide succinyltransferase; E2), DLD (dihydrolipoamide dehydrogenase; E3), and the assembly factor KGD4. It contains multiple copies of the three enzymatic components (E1, E2 and E3). In the nucleus, the 2-oxoglutarate dehydrogenase complex associates with KAT2A. Interacts with ABHD11; this interaction maintains the functional lipoylation of the 2-oxoglutarate dehydrogenase complex. Thiamine diphosphate is required as a cofactor. It depends on Mg(2+) as a cofactor.

Its subcellular location is the mitochondrion. It localises to the nucleus. It catalyses the reaction N(6)-[(R)-lipoyl]-L-lysyl-[protein] + 2-oxoglutarate + H(+) = N(6)-[(R)-S(8)-succinyldihydrolipoyl]-L-lysyl-[protein] + CO2. With respect to regulation, calcium ions and ADP stimulate, whereas ATP and NADH reduce catalytic activity. Functionally, 2-oxoglutarate dehydrogenase (E1o) component of the 2-oxoglutarate dehydrogenase complex (OGDHC). Participates in the first step, rate limiting for the overall conversion of 2-oxoglutarate to succinyl-CoA and CO(2) catalyzed by the whole OGDHC. Catalyzes the irreversible decarboxylation of 2-oxoglutarate (alpha-ketoglutarate) via the thiamine diphosphate (ThDP) cofactor and subsequent transfer of the decarboxylated acyl intermediate on an oxidized dihydrolipoyl group that is covalently amidated to the E2 enzyme (dihydrolipoyllysine-residue succinyltransferase or DLST). Plays a key role in the Krebs (citric acid) cycle, which is a common pathway for oxidation of fuel molecules, including carbohydrates, fatty acids, and amino acids. Can catalyze the decarboxylation of 2-oxoadipate in vitro, but at a much lower rate than 2-oxoglutarate. Mainly active in the mitochondrion. A fraction of the 2-oxoglutarate dehydrogenase complex also localizes in the nucleus and is required for lysine succinylation of histones: associates with KAT2A on chromatin and provides succinyl-CoA to histone succinyltransferase KAT2A. The polypeptide is 2-oxoglutarate dehydrogenase complex component E1 (Homo sapiens (Human)).